The following is a 113-amino-acid chain: uncharacterized protein (113 aa).

Residues 4–26 traverse the membrane as a helical segment; it reads VLFKIAVALLYLLSFFLHRLHLR. The segment at 32 to 74 is disordered; that stretch reads RRRRRRHHRRHHRRHHHHRRRRRRRRRRRRRHHRHHHHRHRRR.

It is found in the membrane. This is an uncharacterized protein from Saccharomyces cerevisiae (strain ATCC 204508 / S288c) (Baker's yeast).